A 292-amino-acid chain; its full sequence is Porphobilinogen deaminase (292 aa).

The residue at position 235 (Cys235) is an S-(dipyrrolylmethanemethyl)cysteine.

Belongs to the HMBS family. As to quaternary structure, monomer. Requires dipyrromethane as cofactor.

It carries out the reaction 4 porphobilinogen + H2O = hydroxymethylbilane + 4 NH4(+). Its pathway is porphyrin-containing compound metabolism; protoporphyrin-IX biosynthesis; coproporphyrinogen-III from 5-aminolevulinate: step 2/4. Tetrapolymerization of the monopyrrole PBG into the hydroxymethylbilane pre-uroporphyrinogen in several discrete steps. The sequence is that of Porphobilinogen deaminase from Acetivibrio thermocellus (strain ATCC 27405 / DSM 1237 / JCM 9322 / NBRC 103400 / NCIMB 10682 / NRRL B-4536 / VPI 7372) (Clostridium thermocellum).